The primary structure comprises 437 residues: Probable exopolygalacturonase C (437 aa).

An N-terminal signal peptide occupies residues 1–21 (MLITKTAFLAFLLSSVPLAHG). 5 N-linked (GlcNAc...) asparagine glycosylation sites follow: Asn-25, Asn-42, Asn-82, Asn-99, and Asn-149. PbH1 repeat units follow at residues 215-236 (GTNI…AVGS) and 238-259 (SHNI…SIGS). The Proton donor role is filled by Asp-229. Residue His-253 is part of the active site. Asn-269 carries an N-linked (GlcNAc...) asparagine glycan. 2 PbH1 repeats span residues 270–291 (ITNL…RFKS) and 299–320 (VKNV…FVTQ). N-linked (GlcNAc...) asparagine glycans are attached at residues Asn-301 and Asn-311. An intrachain disulfide couples Cys-386 to Cys-392. N-linked (GlcNAc...) asparagine glycosylation is found at Asn-428 and Asn-431.

This sequence belongs to the glycosyl hydrolase 28 family.

It is found in the secreted. It catalyses the reaction [(1-&gt;4)-alpha-D-galacturonosyl](n) + H2O = alpha-D-galacturonate + [(1-&gt;4)-alpha-D-galacturonosyl](n-1). Specific in hydrolyzing the terminal glycosidic bond of polygalacturonic acid and oligogalacturonates. The chain is Probable exopolygalacturonase C (pgxC) from Aspergillus flavus (strain ATCC 200026 / FGSC A1120 / IAM 13836 / NRRL 3357 / JCM 12722 / SRRC 167).